The following is a 144-amino-acid chain: Large ribosomal subunit protein uL16 (144 aa).

The protein belongs to the universal ribosomal protein uL16 family. Part of the 50S ribosomal subunit.

Its function is as follows. Binds 23S rRNA and is also seen to make contacts with the A and possibly P site tRNAs. The chain is Large ribosomal subunit protein uL16 from Ligilactobacillus salivarius (strain UCC118) (Lactobacillus salivarius).